We begin with the raw amino-acid sequence, 89 residues long: Large ribosomal subunit protein bL27 (89 aa).

Residues 1–23 (MAHKKAGGSSRNGRDSHSKRLGV) form a disordered region.

The protein belongs to the bacterial ribosomal protein bL27 family.

This chain is Large ribosomal subunit protein bL27, found in Mesorhizobium japonicum (strain LMG 29417 / CECT 9101 / MAFF 303099) (Mesorhizobium loti (strain MAFF 303099)).